We begin with the raw amino-acid sequence, 144 residues long: Flagellar assembly factor FliW (144 aa).

It belongs to the FliW family. Interacts with translational regulator CsrA and flagellin(s).

The protein resides in the cytoplasm. Acts as an anti-CsrA protein, binds CsrA and prevents it from repressing translation of its target genes, one of which is flagellin. Binds to flagellin and participates in the assembly of the flagellum. The protein is Flagellar assembly factor FliW of Bacillus pumilus (strain SAFR-032).